The sequence spans 342 residues: MLSERQAKILKVIVSEYIKTNQAVSSKRIQELLNIKVSSATIRNDSAALEEMNFLEKQHTSSGRVPSTKGYRYYVDHLMEFDDYNESLKENLKSILFQRGTKIENVLEQASQIISEMTKMTAIVTKQNLNSELMVKKIDLIPLSETMASVIFILSNGEMQNQLFNLKDISLSDLSISIKIFSDCLVDTPVKEIENNISLIRPNLETTVKNYDLILETFMSNILQTKESKKEIVGMKNMLENPEFNDTDKLRKVINIMENMSPFDWFDVSYSSNQKMIQISTKIGEEISEDLSDISIVETAIKTEQGSTMLTLVGPKRVDYSQANQLINLIVEIINGDDHKNE.

It belongs to the HrcA family.

Its function is as follows. Negative regulator of class I heat shock genes (grpE-dnaK-dnaJ and groELS operons). Prevents heat-shock induction of these operons. In Mesoplasma florum (strain ATCC 33453 / NBRC 100688 / NCTC 11704 / L1) (Acholeplasma florum), this protein is Heat-inducible transcription repressor HrcA.